The sequence spans 185 residues: Ribosome-recycling factor (185 aa).

It belongs to the RRF family.

The protein resides in the cytoplasm. Responsible for the release of ribosomes from messenger RNA at the termination of protein biosynthesis. May increase the efficiency of translation by recycling ribosomes from one round of translation to another. This Pseudomonas savastanoi pv. phaseolicola (strain 1448A / Race 6) (Pseudomonas syringae pv. phaseolicola (strain 1448A / Race 6)) protein is Ribosome-recycling factor.